The chain runs to 252 residues: MALHFSAQQFEGRFQSKRLNNWEYPRFSPPRPRGLQKNAKVVAANNGHLLPEVIKEGNSFGQYRGTYELPRRITRAFCAHYDACLSGRYKFVDFPRDLCNCQRENRRALACDQRLTLGHKDDPYWMRERCQTKCEGLQKLRALSERSARCNRAKCDVVSEKTVKMTPKAIKTTGVATEKRRRKRTITAFSKGRTALHPNELTKPIPSSEKPAATVATPKDKPKDKPKDKEAGKKDKTKDKGKEKERKAAKGH.

The segment at 177 to 252 (TEKRRRKRTI…EKERKAAKGH (76 aa)) is disordered. The segment covering 218-252 (PKDKPKDKPKDKEAGKKDKTKDKGKEKERKAAKGH) has biased composition (basic and acidic residues).

Belongs to the Flattop family.

The polypeptide is Protein Flattop homolog (Drosophila melanogaster (Fruit fly)).